A 343-amino-acid polypeptide reads, in one-letter code: N-acetyl-gamma-glutamyl-phosphate reductase (343 aa).

Cys149 is a catalytic residue.

This sequence belongs to the NAGSA dehydrogenase family. Type 1 subfamily.

Its subcellular location is the cytoplasm. The enzyme catalyses N-acetyl-L-glutamate 5-semialdehyde + phosphate + NADP(+) = N-acetyl-L-glutamyl 5-phosphate + NADPH + H(+). It functions in the pathway amino-acid biosynthesis; L-arginine biosynthesis; N(2)-acetyl-L-ornithine from L-glutamate: step 3/4. In terms of biological role, catalyzes the NADPH-dependent reduction of N-acetyl-5-glutamyl phosphate to yield N-acetyl-L-glutamate 5-semialdehyde. In Methanococcus maripaludis (strain C6 / ATCC BAA-1332), this protein is N-acetyl-gamma-glutamyl-phosphate reductase.